Here is a 79-residue protein sequence, read N- to C-terminus: Sec-independent protein translocase protein TatA (79 aa).

A helical transmembrane segment spans residues 1–21 (MGFSTTHLLIFLVIIIVIFGT). Residues 43–63 (KEGSDKAADAPAAAPQQVASS) form a disordered region. Low complexity predominate over residues 51–63 (DAPAAAPQQVASS).

This sequence belongs to the TatA/E family. In terms of assembly, the Tat system comprises two distinct complexes: a TatABC complex, containing multiple copies of TatA, TatB and TatC subunits, and a separate TatA complex, containing only TatA subunits. Substrates initially bind to the TatABC complex, which probably triggers association of the separate TatA complex to form the active translocon.

It localises to the cell inner membrane. Its function is as follows. Part of the twin-arginine translocation (Tat) system that transports large folded proteins containing a characteristic twin-arginine motif in their signal peptide across membranes. TatA could form the protein-conducting channel of the Tat system. This is Sec-independent protein translocase protein TatA from Albidiferax ferrireducens (strain ATCC BAA-621 / DSM 15236 / T118) (Rhodoferax ferrireducens).